The following is a 164-amino-acid chain: Protein LIGHT-DEPENDENT SHORT HYPOCOTYLS 8 (164 aa).

The ALOG domain occupies 23-150; the sequence is RYESQKSRDW…ARGVLYKKKK (128 aa). The Nuclear localization signal motif lies at 148-152; the sequence is KKKRL.

This sequence belongs to the plant homeotic and developmental regulators ALOG protein family.

It is found in the nucleus. In terms of biological role, probable transcription regulator that acts as a developmental regulator by promoting cell growth in response to light. In Arabidopsis thaliana (Mouse-ear cress), this protein is Protein LIGHT-DEPENDENT SHORT HYPOCOTYLS 8 (LSH8).